A 412-amino-acid polypeptide reads, in one-letter code: CCA-adding enzyme (412 aa).

2 residues coordinate ATP: serine 41 and lysine 44. The CTP site is built by serine 41 and lysine 44. Aspartate 53, aspartate 55, and aspartate 106 together coordinate Mg(2+). Residues histidine 129, lysine 149, and tyrosine 158 each contribute to the ATP site. CTP-binding residues include histidine 129, lysine 149, and tyrosine 158.

The protein belongs to the tRNA nucleotidyltransferase/poly(A) polymerase family. Archaeal CCA-adding enzyme subfamily. In terms of assembly, homodimer. Requires Mg(2+) as cofactor.

It catalyses the reaction a tRNA precursor + 2 CTP + ATP = a tRNA with a 3' CCA end + 3 diphosphate. The catalysed reaction is a tRNA with a 3' CCA end + 2 CTP + ATP = a tRNA with a 3' CCACCA end + 3 diphosphate. Its function is as follows. Catalyzes the addition and repair of the essential 3'-terminal CCA sequence in tRNAs without using a nucleic acid template. Adds these three nucleotides in the order of C, C, and A to the tRNA nucleotide-73, using CTP and ATP as substrates and producing inorganic pyrophosphate. tRNA 3'-terminal CCA addition is required both for tRNA processing and repair. Also involved in tRNA surveillance by mediating tandem CCA addition to generate a CCACCA at the 3' terminus of unstable tRNAs. While stable tRNAs receive only 3'-terminal CCA, unstable tRNAs are marked with CCACCA and rapidly degraded. In Saccharolobus islandicus (strain M.16.27) (Sulfolobus islandicus), this protein is CCA-adding enzyme.